Reading from the N-terminus, the 75-residue chain is Putative defensin-like protein 271 (75 aa).

Residues 1-23 (MTSMKLHIVALCIIVSFLVNVQS) form the signal peptide. 4 disulfides stabilise this stretch: cysteine 33–cysteine 72, cysteine 39–cysteine 61, cysteine 45–cysteine 70, and cysteine 49–cysteine 71.

Belongs to the DEFL family.

It is found in the secreted. The protein is Putative defensin-like protein 271 of Arabidopsis thaliana (Mouse-ear cress).